Here is a 616-residue protein sequence, read N- to C-terminus: Proline--tRNA ligase (616 aa).

This sequence belongs to the class-II aminoacyl-tRNA synthetase family. ProS type 1 subfamily. As to quaternary structure, homodimer.

Its subcellular location is the cytoplasm. The enzyme catalyses tRNA(Pro) + L-proline + ATP = L-prolyl-tRNA(Pro) + AMP + diphosphate. Functionally, catalyzes the attachment of proline to tRNA(Pro) in a two-step reaction: proline is first activated by ATP to form Pro-AMP and then transferred to the acceptor end of tRNA(Pro). As ProRS can inadvertently accommodate and process non-cognate amino acids such as alanine and cysteine, to avoid such errors it has two additional distinct editing activities against alanine. One activity is designated as 'pretransfer' editing and involves the tRNA(Pro)-independent hydrolysis of activated Ala-AMP. The other activity is designated 'posttransfer' editing and involves deacylation of mischarged Ala-tRNA(Pro). The misacylated Cys-tRNA(Pro) is not edited by ProRS. The protein is Proline--tRNA ligase of Lactococcus lactis subsp. cremoris (strain MG1363).